Here is a 120-residue protein sequence, read N- to C-terminus: uncharacterized protein (120 aa).

It is found in the cytoplasm. It localises to the nucleus. This is an uncharacterized protein from Schizosaccharomyces pombe (strain 972 / ATCC 24843) (Fission yeast).